Consider the following 376-residue polypeptide: N-acetyldiaminopimelate deacetylase (376 aa).

The active site involves aspartate 70. The active-site Proton acceptor is the glutamate 129.

This sequence belongs to the peptidase M20A family. N-acetyldiaminopimelate deacetylase subfamily.

The enzyme catalyses N-acetyl-(2S,6S)-2,6-diaminopimelate + H2O = (2S,6S)-2,6-diaminopimelate + acetate. It functions in the pathway amino-acid biosynthesis; L-lysine biosynthesis via DAP pathway; LL-2,6-diaminopimelate from (S)-tetrahydrodipicolinate (acetylase route): step 3/3. Its function is as follows. Catalyzes the conversion of N-acetyl-diaminopimelate to diaminopimelate and acetate. The chain is N-acetyldiaminopimelate deacetylase from Bacillus pumilus (strain SAFR-032).